The chain runs to 209 residues: C-type lectin domain family 6 member A (209 aa).

The Cytoplasmic portion of the chain corresponds to M1–S20. Residues A21–F43 traverse the membrane as a helical; Signal-anchor for type II membrane protein segment. Over I44–L209 the chain is Extracellular. Disulfide bonds link C64-C78, C79-C90, C107-C202, and C176-C194. The C-type lectin domain maps to F86–E203. Ca(2+) is bound by residues V116, N118, and E122. The N-linked (GlcNAc...) asparagine glycan is linked to N131. Ca(2+) is bound by residues E168, N170, and E174. Alpha-D-mannopyranose is bound by residues E168–N170, E174, W182, and N190–D191. Ca(2+) contacts are provided by N190, D191, and E203.

Associated with FCER1G. Heterodimer with CLEC4D; this heterodimer forms a pattern recognition receptor (PRR) against fungal infection. Expressed by the XS52 DC (dendritic cell) line (at protein level). Expressed constitutively by the epidermis, and skin resident DC appear to be the major source of this expression. Expressed in the spleen and thymus. Expression was undetectable in non-DC lines, including macrophage lines (J774 and Raw), T-cell lines (7-17, HDK-1, and D10), B-cell hybridoma (5C5), a keratinocyte line (Pam 212), and a fibroblast line (NS01).

The protein localises to the cell membrane. Calcium-dependent lectin that acts as a pattern recognition receptor (PRR) of the innate immune system: specifically recognizes and binds alpha-mannans on C.albicans hypheas. Binding of C.albicans alpha-mannans to this receptor complex leads to phosphorylation of the immunoreceptor tyrosine-based activation motif (ITAM) of FCER1G, triggering activation of SYK, CARD9 and NF-kappa-B, consequently driving maturation of antigen-presenting cells and shaping antigen-specific priming of T-cells toward effector T-helper 1 and T-helper 17 cell subtypes. Also recognizes, in a mannose-dependent manner, allergens from house dust mite and fungi, by promoting cysteinyl leukotriene production. Recognizes soluble elements from the eggs of Shistosoma mansoni altering adaptive immune responses. In Mus musculus (Mouse), this protein is C-type lectin domain family 6 member A.